The following is a 657-amino-acid chain: Histidine ammonia-lyase (657 aa).

The 5-imidazolinone (Ala-Gly) cross-link spans 253-255 (ASG). Ser-254 is modified (2,3-didehydroalanine (Ser)). Phosphothreonine is present on Thr-396. Ser-635 carries the post-translational modification Phosphoserine. The residue at position 637 (Thr-637) is a Phosphothreonine. Ser-648 is subject to Phosphoserine.

Belongs to the PAL/histidase family. Contains an active site 4-methylidene-imidazol-5-one (MIO), which is formed autocatalytically by cyclization and dehydration of residues Ala-Ser-Gly.

The catalysed reaction is L-histidine = trans-urocanate + NH4(+). It participates in amino-acid degradation; L-histidine degradation into L-glutamate; N-formimidoyl-L-glutamate from L-histidine: step 1/3. This Homo sapiens (Human) protein is Histidine ammonia-lyase (HAL).